Here is a 775-residue protein sequence, read N- to C-terminus: Venom dipeptidyl peptidase 4 (775 aa).

A signal peptide spans 1 to 23 (MEVLVQLALLLVVHGSLVVLVAG). Residues Asn-68 and Asn-239 are each glycosylated (N-linked (GlcNAc...) asparagine). 2 disulfides stabilise this stretch: Cys-450/Cys-453 and Cys-463/Cys-481. Residues Asn-473, Asn-505, Asn-578, and Asn-631 are each glycosylated (N-linked (GlcNAc...) asparagine). Ser-639 serves as the catalytic Charge relay system. Cysteines 659 and 770 form a disulfide. N-linked (GlcNAc...) asparagine glycosylation is found at Asn-689 and Asn-694. Residues Asp-718 and His-750 each act as charge relay system in the active site.

This sequence belongs to the peptidase S9B family. DPPIV subfamily. As to expression, expressed by the venom duct.

It localises to the secreted. The catalysed reaction is Release of an N-terminal dipeptide, Xaa-Yaa-|-Zaa-, from a polypeptide, preferentially when Yaa is Pro, provided Zaa is neither Pro nor hydroxyproline.. Its activity is regulated as follows. Inhibited by diprotin A. In terms of biological role, venom dipeptidyl-peptidase which removes N-terminal dipeptides sequentially from polypeptides having unsubstituted N-termini provided that the penultimate residue is proline. May process promelittin into its active form and/or modulate the chemotactic activity of immune cells after the insect sting. This chain is Venom dipeptidyl peptidase 4, found in Apis mellifera (Honeybee).